Here is a 132-residue protein sequence, read N- to C-terminus: Outer membrane protein assembly factor BamE (132 aa).

The signal sequence occupies residues 1–16; that stretch reads MQKLVLTLLVTSLLAG. Residue Cys17 is the site of N-palmitoyl cysteine attachment. Residue Cys17 is the site of S-diacylglycerol cysteine attachment.

Belongs to the BamE family. Part of the Bam complex.

It is found in the cell outer membrane. In terms of biological role, part of the outer membrane protein assembly complex, which is involved in assembly and insertion of beta-barrel proteins into the outer membrane. This is Outer membrane protein assembly factor BamE from Acinetobacter pittii (strain PHEA-2).